Reading from the N-terminus, the 69-residue chain is Pleurain-A1 (69 aa).

The first 18 residues, 1-18 (MFTLKKTLLLLFFLGTIS), serve as a signal peptide directing secretion. Positions 19–43 (ISLCKQERDADEDDGRKMTEEEVKR) are excised as a propeptide. Cysteines 63 and 69 form a disulfide.

In terms of tissue distribution, expressed by the skin glands.

Its subcellular location is the secreted. Functionally, antimicrobial peptide. Has activity against the Gram-positive bacterium S.aureus ATCC2592 (MIC=15 ug/ml), the Gram-negative bacteria E.coli ATCC25922 (MIC=60 ug/ml), B.dysenteriae (MIC=120 ug/ml), H.pylori NTCT11637 (MIC=30 ug/ml), and the fungus C.albicans ATCC2002 (MIC=30 ug/ml). Has little hemolytic activity on rabbit red blood cells. In Nidirana pleuraden (Yunnan pond frog), this protein is Pleurain-A1.